The primary structure comprises 310 residues: 4-hydroxy-3-methylbut-2-enyl diphosphate reductase (310 aa).

Cys-12 is a binding site for [4Fe-4S] cluster. Positions 41 and 74 each coordinate (2E)-4-hydroxy-3-methylbut-2-enyl diphosphate. Dimethylallyl diphosphate contacts are provided by His-41 and His-74. Residues His-41 and His-74 each coordinate isopentenyl diphosphate. [4Fe-4S] cluster is bound at residue Cys-96. (2E)-4-hydroxy-3-methylbut-2-enyl diphosphate is bound at residue His-124. His-124 lines the dimethylallyl diphosphate pocket. His-124 is a binding site for isopentenyl diphosphate. Glu-126 functions as the Proton donor in the catalytic mechanism. Thr-167 contributes to the (2E)-4-hydroxy-3-methylbut-2-enyl diphosphate binding site. Cys-197 serves as a coordination point for [4Fe-4S] cluster. Residues Ser-225, Ser-226, Asn-227, and Ser-269 each contribute to the (2E)-4-hydroxy-3-methylbut-2-enyl diphosphate site. Positions 225, 226, 227, and 269 each coordinate dimethylallyl diphosphate. Ser-225, Ser-226, Asn-227, and Ser-269 together coordinate isopentenyl diphosphate.

Belongs to the IspH family. It depends on [4Fe-4S] cluster as a cofactor.

It catalyses the reaction isopentenyl diphosphate + 2 oxidized [2Fe-2S]-[ferredoxin] + H2O = (2E)-4-hydroxy-3-methylbut-2-enyl diphosphate + 2 reduced [2Fe-2S]-[ferredoxin] + 2 H(+). The enzyme catalyses dimethylallyl diphosphate + 2 oxidized [2Fe-2S]-[ferredoxin] + H2O = (2E)-4-hydroxy-3-methylbut-2-enyl diphosphate + 2 reduced [2Fe-2S]-[ferredoxin] + 2 H(+). It functions in the pathway isoprenoid biosynthesis; dimethylallyl diphosphate biosynthesis; dimethylallyl diphosphate from (2E)-4-hydroxy-3-methylbutenyl diphosphate: step 1/1. Its pathway is isoprenoid biosynthesis; isopentenyl diphosphate biosynthesis via DXP pathway; isopentenyl diphosphate from 1-deoxy-D-xylulose 5-phosphate: step 6/6. In terms of biological role, catalyzes the conversion of 1-hydroxy-2-methyl-2-(E)-butenyl 4-diphosphate (HMBPP) into a mixture of isopentenyl diphosphate (IPP) and dimethylallyl diphosphate (DMAPP). Acts in the terminal step of the DOXP/MEP pathway for isoprenoid precursor biosynthesis. The polypeptide is 4-hydroxy-3-methylbut-2-enyl diphosphate reductase (Tolumonas auensis (strain DSM 9187 / NBRC 110442 / TA 4)).